The sequence spans 67 residues: uncharacterized protein (67 aa).

This is an uncharacterized protein from Haloarcula hispanica (His1V).